A 969-amino-acid polypeptide reads, in one-letter code: Alanine--tRNA ligase (969 aa).

The N-terminal 8 residues, 1-8 (MIKTLLRR), are a transit peptide targeting the mitochondrion. H616, H620, C735, and H739 together coordinate Zn(2+).

The protein belongs to the class-II aminoacyl-tRNA synthetase family. In terms of assembly, monomer. Requires Zn(2+) as cofactor.

Its subcellular location is the mitochondrion. It localises to the cytoplasm. The catalysed reaction is tRNA(Ala) + L-alanine + ATP = L-alanyl-tRNA(Ala) + AMP + diphosphate. Catalyzes the attachment of alanine to tRNA(Ala) in a two-step reaction: alanine is first activated by ATP to form Ala-AMP and then transferred to the acceptor end of tRNA(Ala). Also edits incorrectly charged tRNA(Ala) via its editing domain. In Candida albicans (strain SC5314 / ATCC MYA-2876) (Yeast), this protein is Alanine--tRNA ligase.